Reading from the N-terminus, the 196-residue chain is Pyridoxal 5'-phosphate synthase subunit PdxT (196 aa).

Residue 47–49 (GES) participates in L-glutamine binding. Catalysis depends on Cys-79, which acts as the Nucleophile. Residues Arg-106 and 134–135 (IR) each bind L-glutamine. Catalysis depends on charge relay system residues His-170 and Glu-172.

It belongs to the glutaminase PdxT/SNO family. As to quaternary structure, in the presence of PdxS, forms a dodecamer of heterodimers. Only shows activity in the heterodimer.

It carries out the reaction aldehydo-D-ribose 5-phosphate + D-glyceraldehyde 3-phosphate + L-glutamine = pyridoxal 5'-phosphate + L-glutamate + phosphate + 3 H2O + H(+). The catalysed reaction is L-glutamine + H2O = L-glutamate + NH4(+). It functions in the pathway cofactor biosynthesis; pyridoxal 5'-phosphate biosynthesis. Catalyzes the hydrolysis of glutamine to glutamate and ammonia as part of the biosynthesis of pyridoxal 5'-phosphate. The resulting ammonia molecule is channeled to the active site of PdxS. This Bacillus cytotoxicus (strain DSM 22905 / CIP 110041 / 391-98 / NVH 391-98) protein is Pyridoxal 5'-phosphate synthase subunit PdxT.